We begin with the raw amino-acid sequence, 468 residues long: Putrescine aminotransferase (468 aa).

Residues 150 to 151 (GT) and Gln-274 each bind pyridoxal 5'-phosphate. At Lys-300 the chain carries N6-(pyridoxal phosphate)lysine. Thr-332 contributes to the pyridoxal 5'-phosphate binding site.

The protein belongs to the class-III pyridoxal-phosphate-dependent aminotransferase family. Putrescine aminotransferase subfamily. Pyridoxal 5'-phosphate serves as cofactor.

It catalyses the reaction an alkane-alpha,omega-diamine + 2-oxoglutarate = an omega-aminoaldehyde + L-glutamate. The enzyme catalyses putrescine + 2-oxoglutarate = 1-pyrroline + L-glutamate + H2O. It carries out the reaction cadaverine + 2-oxoglutarate = 5-aminopentanal + L-glutamate. It functions in the pathway amine and polyamine degradation; putrescine degradation; 4-aminobutanal from putrescine (transaminase route): step 1/1. In terms of biological role, catalyzes the aminotransferase reaction from putrescine to 2-oxoglutarate, leading to glutamate and 4-aminobutanal, which spontaneously cyclizes to form 1-pyrroline. This is the first step in one of two pathways for putrescine degradation, where putrescine is converted into 4-aminobutanoate (gamma-aminobutyrate or GABA) via 4-aminobutanal. Also functions as a cadaverine transaminase in a a L-lysine degradation pathway to succinate that proceeds via cadaverine, glutarate and L-2-hydroxyglutarate. The polypeptide is Putrescine aminotransferase (Pectobacterium atrosepticum (strain SCRI 1043 / ATCC BAA-672) (Erwinia carotovora subsp. atroseptica)).